A 212-amino-acid chain; its full sequence is 3-demethoxyubiquinol 3-hydroxylase (212 aa).

The Fe cation site is built by glutamate 61, glutamate 91, histidine 94, glutamate 143, glutamate 175, and histidine 178.

This sequence belongs to the COQ7 family. It depends on Fe cation as a cofactor.

The protein resides in the cell membrane. The catalysed reaction is a 5-methoxy-2-methyl-3-(all-trans-polyprenyl)benzene-1,4-diol + AH2 + O2 = a 3-demethylubiquinol + A + H2O. It functions in the pathway cofactor biosynthesis; ubiquinone biosynthesis. Its function is as follows. Catalyzes the hydroxylation of 2-nonaprenyl-3-methyl-6-methoxy-1,4-benzoquinol during ubiquinone biosynthesis. In Paraburkholderia phytofirmans (strain DSM 17436 / LMG 22146 / PsJN) (Burkholderia phytofirmans), this protein is 3-demethoxyubiquinol 3-hydroxylase.